Consider the following 2690-residue polypeptide: MVSRILRPVTGSTVLLFGPQALSFTKEDFDQIRTTVLETQGFSWIVDAVAGLPEHWKALAERIPKLQSILGEQLLENLKDWFTTGQVNEADFHLPNILLSPLVVITQLAQYCQYLELSQADDQSDAHAIQNDNIEALGFCTGLLSAVAVACSTNRRQFQEYGAVAIRLAMLVGAAADAEDALSDYGASKSMAIAWNAPEAGAELSRVLQDFPEAYVSVWYDANRATVTTAAKTVPALQQKLRSAGIIATEVGLRGRFHCDCYGNDIDSMIDFCDSHPAFQFPDASELVLQTRSNAGGDLITKGNLHQHALRLILLERSQWYQTFSTMHAARLQHKDSVLVSFGPERCIPPSLLRGLSAQVVNMADLAVRNMRVPGATSALKYAHAVDENDIAVIGMSCKVAGADDLEGFWDLLCRGESQHQEVPKERFTFDTIFRELDTKRKWFGNFIRDHDAFDHKFFKKSPREIASTDPQQRHMLQIAYQAVEQSGYFCNPSVDKQIGCYIGVCAADYENNIACHAPNAFSATGNLKSFIAGKISHYFGWTGPGLTIDTACSSSAVAVHQACKAILSGECTAALAGGTNVMTNPLWFQNLAGASFLSPTGQCKPFDAHADGYCRGEGIAAVFLKKLSTAIEDGDQILGTIASTAVYQNQNCTPIFVPNSPSLSELFKDVTREAHLVPKQITVVEAHGTGTPVGDPAEYESILRVLGGPNRSTPLHFGSVKGLIGHTECTSGVISLIKVLLMINEGYIPPQASFTTMNPSIKALPEHNMKIATKLTPWNEDFRAALINNYGASGSNASLIVTQAPSARDPATIQVLEGARYPFWFPGPDDRSLRSYASRFLRFIQSKTVSAKNFSPRNLAFNLSRQSNRTFGRAAIFNCASMGELEQKLTALGNGNSSVAPTVRPATRPVVLCFGGQISTFVGLDRQLYDNVVILRSYLDRCDAVCRALKAGSIYPAIFERNPISDPVKLQTSLFAIQYSCAKSWIDCGVQPVALVGHSFGELTAVCISGILGLEDALKMIIGRASLIRDSWGAEKGSMMAVEADLPVVEKLLGESEKLCKDDKPATIACFNGPRSFTLAGSSLAIDAVLQTVSGNSSFSSVRTKKLNVTNAFHSTLVEPLVVDLERTATGLKFGESIIHLERATESHSDEKLTPKYVASHMRDPVYFNHAVQRLAKQHPSCIWLEAGCNSTIINMLGRALGASADHHFQPVNLSSDHGLDSLSDTTVSLWRAGLNVSFWPHHSSQTYEYANLLLPPYQFEKARHWVELKPPPKLTAEPVTQPASPVEELPKGLLTFVGYQDKDQRTARFRINTMVPKYEELVSGHLIAQTAPICPATLEVDLAIEALYSLRPDLVKSTLQPQIHHVDNQAPICVNPERMVWLQLEAFDAERHSWNWKIESTGSQKASATTLHVTGKVFFRSVDDLQFQLDFARYERLVGYQRCLGILNCLDADDIIQGRNIYKTFAEIVDYGEMYRGLQKLVGQGNESAGRIVKKYSGETWLDTHLSDCFSQVGGIWVNCMTDRAPTDMYIANGFEQWLRSPKISCDYERPEIWDVYAYHHRSSDKAYLTDIFIFDSTNGLLTEVILGINYAKVPKMSMSKLLSRLTADGARQSHHAAPVSAPAKLAAPAAVPGPVSAVKVKKASKPKKKQFSAPDISGKVRAMLAELAGLEPEEIKDDTELANIGIDSLMGMELAREIEGIFKCSLPTDELVEVTNFQGLLRCIQEALGPSEGVEEETDNEEGEDGESSENPSVFTPSDAATSVSSAKADVAEFLAEFLGIEESDIAPATLLRDLGVDSLLSTELRSEIASKFDVHIDEEVVLEELSVGEFDVKVNGKSEGTPRSSAASTMPAKIIEGSVKVNASHPTVNSTLHTSSNGELSLPVSTVLEAFGETKALTDQFISDYHCANYMDTILPKQDQLCVALVIEAFEQLGCSLRNAKSGQTLERIKYLPQHERLVEYLYMMLEKGARLVDMDDDRITRTAVTVPSKSSSEICQELMRDYPGHNFANQLTQFCGTRLADVLTGKLDGIKLIFGSEEGRTLVSGLYGDSLLNKLAYKQMEDFLKRLISKLPMHEGPLKILEMGAGTGGTTKWIVPMLASLNVPIEYTFTDLAPSFVAAARKKFKQYPFMKFRVHDIEKAPADDLVGTQHIILASNAVHATHSLTVSTSHIHKALRQDGFLMMLEMTETVYWIDIIFGLLEGWWLFDDGRRHAISHQSRWERDLNTAGFGHVDWTDGHRSEVNIQRIFLALASGQRYERQPVTPSSAAKAPLTDFAARQAAVLKYVRNSTQGFVAPTTSSTSQPEPSPPGKCVLVTGATGSLGSHLVSHFAQLNDVTSVVCINRVSREDPTRRQQQSMESKGISLSHTALSKLIILETDTSKPMLGLPAEQYRHLVNNVTHVLHNAWPMSGKRPVKGFELQFQVMKNLITLAWDISCRRGPDFKVRFQLISSISVVGYYPLRTGNRHVPEERVCIEDLLPNGYSDAKYVCELMLDETLHQYPDRFSPMAVRLGQVAGSKTSGYWNPMEHLSFLVKSSQTLKALPDFEGELSWTPVNDVAGTLADLLLADNTPYPIYHIDNPVRQPWREMIPILADGLDIPKGNVIPFPEWVQRVRRFPGSVELDNPAAKLIDFLDDNFLRMSCGGLLLDTTKSREHSPTLADVGPVSAEVVRKYIQAWKEMGFLH.

The region spanning 96 to 211 (NILLSPLVVI…AELSRVLQDF (116 aa)) is the Starter acyltransferase (SAT) domain. C140 serves as the catalytic Nucleophile; for transacylase activity. H258 (proton donor/acceptor; for transacylase activity) is an active-site residue. In terms of domain architecture, Ketosynthase family 3 (KS3) spans 388–804 (ENDIAVIGMS…GSNASLIVTQ (417 aa)). Catalysis depends on for beta-ketoacyl synthase activity residues C553, H688, and H727. The 268-residue stretch at 915–1182 (FGGQISTFVG…VQRLAKQHPS (268 aa)) folds into the Malonyl-CoA:ACP transacylase (MAT) domain. An N-terminal hotdog fold region spans residues 1296–1426 (LTFVGYQDKD…GKVFFRSVDD (131 aa)). The PKS/mFAS DH domain occupies 1296-1602 (LTFVGYQDKD…YAKVPKMSMS (307 aa)). Residues 1323–1600 (LVSGHLIAQT…INYAKVPKMS (278 aa)) form a product template (PT) domain region. H1327 functions as the Proton acceptor; for dehydratase activity in the catalytic mechanism. A C-terminal hotdog fold region spans residues 1454–1602 (ADDIIQGRNI…YAKVPKMSMS (149 aa)). The active-site Proton donor; for dehydratase activity is the D1510. Residues 1657-1731 (PDISGKVRAM…GLLRCIQEAL (75 aa)) enclose the Carrier 1 domain. At S1691 the chain carries O-(pantetheine 4'-phosphoryl)serine. The interval 1731 to 1764 (LGPSEGVEEETDNEEGEDGESSENPSVFTPSDAA) is disordered. Positions 1736-1751 (GVEEETDNEEGEDGES) are enriched in acidic residues. The segment covering 1755-1764 (PSVFTPSDAA) has biased composition (polar residues). Residues 1768 to 1842 (SSAKADVAEF…EFDVKVNGKS (75 aa)) enclose the Carrier 2 domain. S1802 is modified (O-(pantetheine 4'-phosphoryl)serine). Positions 1948–2255 (QTLERIKYLP…EVNIQRIFLA (308 aa)) are methyltransferase domain. Residues 2320–2564 (VTGATGSLGS…LSWTPVNDVA (245 aa)) enclose the Thioester reductase (TE) domain.

It depends on pantetheine 4'-phosphate as a cofactor.

It participates in secondary metabolite biosynthesis. Its function is as follows. Non-reducing polyketide synthase; part of the gene cluster that mediates the biosynthesis of azaphilone pigments (MonAzPs), a complex mixture of compounds with a common azaphilone skeleton very widely used as food colorants. PigA catalyzes the first step of MonAzPs biosynthesis and forms the hexaketide precursor from successive condensations of five malonyl-CoA units, with a simple acetyl-CoA starter unit. The starter acyl transferase (SAT) domain of pigA selects an acetyl-CoA starter unit, and the ketoacyl synthase (KS)-acyl transferase (AT)-acyl carrier protein (ACP) domains extend this starter unit five times with malonyl-CoA in five successive decarboxylative Claisen condensation cycles. The methyltransferase (MT) domain conducts a single C-methylation at C-4, most likely at the pentaketide stage. The reactive hexaketide chain then undergoes a product template (PT) domain-mediated C-2 to C-7 aldol cyclization to afford the first aromatic ring, followed by reductive release of the first pathway intermediate by the NADPH-dependent reductive release (R) domain. The role of esterase pigG is not clear, but it may play at most a supplementary role in the formation of the benzaldehyde produced by the pigA nrPKS. This very reactive benzaldehyde is intercepted by the pigC ketoreductase that to provide the first stable enzyme-free MonAzPs intermediate, 6-(4-hydroxy-2-oxopentyl)-3-methyl-2,4-dioxocyclohexane carbaldehyde, also known as M7PKS-1. The FAD-dependent monooxygenase pigN hydroxylates M7PKS-1 at C-4, which triggers the formation of the pyran ring. PigJ, pigK and pigD are involved in the acetylation of the pyran ring. PigJ and pigK form the two subunits of a dedicated fungal FAS that produces the side chain fatty acyl moiety of MonAzPs and pigD transfers the fatty acyl chain to the C-4 alcohol. PigM and pigO are involved in the elimination of the omega-1 alcohol. PigM acts as an O-acetyltransferase that synthesizes the putative O-11 acetyl intermediate whereas pigO eliminates acetic acid to yield an intermediate with a C10(11) double bond. The dehydration of the C-11 alcohol followed by the reduction of the C6(7) double bond by the NAD(P)H-dependent oxidoreductase pigE increases the electrophilicity of the C-5 ketone of the resulting acyl benzopyran. This in turn sets up the C-5 ketone for an intramolecular Knoevenagel aldol condensation with the C-20 enol of the side chain. This condensation affords the characteristic linear tricyclic carbon skeletons of the yellow pigments that serve as the common precursors for the classical yellow pigments monascin and ankaflavin, orange pigments rubopunctatin and monascorubrin, and red pigments ribropunctamine and monascorubramine. The FAD-dependent oxidoreductase pigF is especially invoved in the biosynthesis of orange and red pigments via desaturation of C6(7). In Monascus ruber (Mold), this protein is Non-reducing polyketide synthase pigA.